A 156-amino-acid polypeptide reads, in one-letter code: Snaclec A6 (156 aa).

The signal sequence occupies residues 1-23 (MGRSISVSFGLLVVFLSLSGTGA). Cystine bridges form between Cys27/Cys38, Cys55/Cys154, and Cys129/Cys146. A C-type lectin domain is found at 34–155 (HEGHCYKVFN…CGKPYRFTCE (122 aa)).

Belongs to the snaclec family. Heterodimer; disulfide-linked. Expressed by the venom gland.

Its subcellular location is the secreted. In terms of biological role, interferes with one step of hemostasis (modulation of platelet aggregation, or coagulation cascade, for example). This chain is Snaclec A6, found in Macrovipera lebetinus (Levantine viper).